We begin with the raw amino-acid sequence, 425 residues long: Enolase (425 aa).

Residue Q163 coordinates (2R)-2-phosphoglycerate. Catalysis depends on E205, which acts as the Proton donor. Mg(2+) is bound by residues D242, E285, and D312. K337, R366, S367, and K388 together coordinate (2R)-2-phosphoglycerate. Catalysis depends on K337, which acts as the Proton acceptor.

Belongs to the enolase family. It depends on Mg(2+) as a cofactor.

It is found in the cytoplasm. The protein resides in the secreted. It localises to the cell surface. The enzyme catalyses (2R)-2-phosphoglycerate = phosphoenolpyruvate + H2O. It functions in the pathway carbohydrate degradation; glycolysis; pyruvate from D-glyceraldehyde 3-phosphate: step 4/5. In terms of biological role, catalyzes the reversible conversion of 2-phosphoglycerate (2-PG) into phosphoenolpyruvate (PEP). It is essential for the degradation of carbohydrates via glycolysis. The chain is Enolase from Ruegeria sp. (strain TM1040) (Silicibacter sp.).